The following is a 142-amino-acid chain: Coactosin-like protein (142 aa).

Alanine 2 bears the N-acetylalanine mark. The ADF-H domain occupies 2-130 (ATKIDKEACR…EEDFIKNELK (129 aa)). The segment at 66-75 (TGDAMSKRSK) is flexible and important for F-actin binding. 2 positions are modified to N6-acetyllysine: lysine 102 and lysine 126.

The protein belongs to the actin-binding proteins ADF family. Coactosin subfamily. Interacts with 5-lipoxygenase (ALOX5/5LO) in a calcium-independent manner. Binds to F-actin with a stoichiometry of 1:2.

It is found in the cytoplasm. The protein resides in the cytoskeleton. It localises to the nucleus. Its function is as follows. Binds to F-actin in a calcium-independent manner. Has no direct effect on actin depolymerization. Acts as a chaperone for ALOX5 (5LO), influencing both its stability and activity in leukotrienes synthesis. In Bos taurus (Bovine), this protein is Coactosin-like protein (COTL1).